The following is a 719-amino-acid chain: Translation factor guf1, mitochondrial (719 aa).

The transit peptide at 1–75 (MRGALCRPDV…TRCFSALRSL (75 aa)) directs the protein to the mitochondrion. Positions 119-301 (ERYRNFCIVA…AVISNVPAPV (183 aa)) constitute a tr-type G domain. GTP is bound by residues 128–135 (AHIDHGKS), 194–198 (DTPGH), and 248–251 (NKID).

The protein belongs to the TRAFAC class translation factor GTPase superfamily. Classic translation factor GTPase family. LepA subfamily.

It localises to the mitochondrion inner membrane. The enzyme catalyses GTP + H2O = GDP + phosphate + H(+). Its function is as follows. Promotes mitochondrial protein synthesis. May act as a fidelity factor of the translation reaction, by catalyzing a one-codon backward translocation of tRNAs on improperly translocated ribosomes. Binds to mitochondrial ribosomes in a GTP-dependent manner. The polypeptide is Translation factor guf1, mitochondrial (guf1) (Neurospora crassa (strain ATCC 24698 / 74-OR23-1A / CBS 708.71 / DSM 1257 / FGSC 987)).